The chain runs to 420 residues: Histidine--tRNA ligase (420 aa).

The protein belongs to the class-II aminoacyl-tRNA synthetase family. As to quaternary structure, homodimer.

It is found in the cytoplasm. It catalyses the reaction tRNA(His) + L-histidine + ATP = L-histidyl-tRNA(His) + AMP + diphosphate + H(+). In Mycoplasmopsis pulmonis (strain UAB CTIP) (Mycoplasma pulmonis), this protein is Histidine--tRNA ligase (hisS).